A 485-amino-acid chain; its full sequence is ATP synthase subunit beta 2 (485 aa).

Residues 1–10 (MSGMGEKSEQ) are compositionally biased toward basic and acidic residues. The tract at residues 1–27 (MSGMGEKSEQISKSARSTDPQEQESVA) is disordered. Residues 11 to 24 (ISKSARSTDPQEQE) are compositionally biased toward polar residues. ATP is bound at residue 177–184 (GGAGVGKT).

This sequence belongs to the ATPase alpha/beta chains family. As to quaternary structure, F-type ATPases have 2 components, CF(1) - the catalytic core - and CF(0) - the membrane proton channel. CF(1) has five subunits: alpha(3), beta(3), gamma(1), delta(1), epsilon(1). CF(0) has three main subunits: a(1), b(2) and c(9-12). The alpha and beta chains form an alternating ring which encloses part of the gamma chain. CF(1) is attached to CF(0) by a central stalk formed by the gamma and epsilon chains, while a peripheral stalk is formed by the delta and b chains.

The protein localises to the cell inner membrane. The catalysed reaction is ATP + H2O + 4 H(+)(in) = ADP + phosphate + 5 H(+)(out). In terms of biological role, produces ATP from ADP in the presence of a proton gradient across the membrane. The catalytic sites are hosted primarily by the beta subunits. In Nitrosomonas eutropha (strain DSM 101675 / C91 / Nm57), this protein is ATP synthase subunit beta 2.